The primary structure comprises 418 residues: MQHKRSRAMASPRSPFLFVLLALAVGGTANAHDDGLPAFRYSAELLGQLQLPSVALPLNDDLFLYGRDAEAFDLEAYLALNAPALRDKSEYLEHWSGYYSINPKVLLTLMVMQSGPLGAPDERALAAPLGRLSAKRGFDAQVRDVLQQLSRRYYGFEEYQLRQAAARKAVGEDGLNAASAALLGLLREGAKVSAVQGGNPLGAYAQTFQRLFGTPAAELLQPSNRVARQLQAKAALAPPSNLMQLPWRQGYSWQPNGAHSNTGSGYPYSSFDASYDWPRWGSATYSVVAAHAGTVRVLSRCQVRVTHPSGWATNYYHMDQIQVSNGQQVSADTKLGVYAGNINTALCEGGSSTGPHLHFSLLYNGAFVSLQGASFGPYRINVGTSNYDNDCRRYYFYNQSAGTTHCAFRPLYNPGLAL.

The N-terminal stretch at 1 to 31 (MQHKRSRAMASPRSPFLFVLLALAVGGTANA) is a signal peptide. Positions 32–236 (HDDGLPAFRY…ARQLQAKAAL (205 aa)) are excised as a propeptide. Zn(2+)-binding residues include histidine 259 and aspartate 272. Cysteine 301 and cysteine 347 are disulfide-bonded. Residues histidine 317 and histidine 356 each act as proton donor/acceptor in the active site. A Zn(2+)-binding site is contributed by histidine 358. Cysteines 391 and 406 form a disulfide.

It belongs to the peptidase M23A family. Zn(2+) is required as a cofactor. Processing of pro-LasA can occur extracellularly and requires elastase (lasB). Secretion and processing may be linked.

The protein resides in the secreted. Involved in proteolysis and elastolysis (degradation of the host protein elastin). Has staphylolytic activity (degrades pentaglycine cross-links in cell wall peptidoglycan), preferring Gly-Gly-|-X substrates where X is Ala or Gly. Enhances the elastolytic but not proteolytic activity of elastase (lasB) and elastolytic activity of other proteases. Degradation of host elastin is likely to contribute to the pathogenicity of P.aeruginosa. While either His-317 or His-356 can abstract a proton in the hydrolysis reaction, the same residue performs both functions in a given catalytic cycle, with the other stabilizing the catalytic intermediate. The sequence is that of Protease LasA (lasA) from Pseudomonas aeruginosa (strain ATCC 15692 / DSM 22644 / CIP 104116 / JCM 14847 / LMG 12228 / 1C / PRS 101 / PAO1).